A 152-amino-acid chain; its full sequence is Ribosome maturation factor RimP (152 aa).

It belongs to the RimP family.

It localises to the cytoplasm. In terms of biological role, required for maturation of 30S ribosomal subunits. The sequence is that of Ribosome maturation factor RimP from Pseudoalteromonas atlantica (strain T6c / ATCC BAA-1087).